Consider the following 108-residue polypeptide: MIPGEYLCADGVIEINPGRERIALDVVNTGDRPVQVGSHVHFPQANAALDFDRAAAHGCRLDIPAGTAVRFEPGLAQRVSLVPLAGTREVYGIGPNPPGKLDDPEGEQ.

The protein belongs to the urease beta subunit family. Heterotrimer of UreA (gamma), UreB (beta) and UreC (alpha) subunits. Three heterotrimers associate to form the active enzyme.

The protein localises to the cytoplasm. The enzyme catalyses urea + 2 H2O + H(+) = hydrogencarbonate + 2 NH4(+). The protein operates within nitrogen metabolism; urea degradation; CO(2) and NH(3) from urea (urease route): step 1/1. This Nocardia farcinica (strain IFM 10152) protein is Urease subunit beta.